A 284-amino-acid chain; its full sequence is tRNA pseudouridine synthase A (284 aa).

The Nucleophile role is filled by Asp-52. Position 149 (Tyr-149) interacts with substrate.

It belongs to the tRNA pseudouridine synthase TruA family. As to quaternary structure, homodimer.

It catalyses the reaction uridine(38/39/40) in tRNA = pseudouridine(38/39/40) in tRNA. Functionally, formation of pseudouridine at positions 38, 39 and 40 in the anticodon stem and loop of transfer RNAs. The protein is tRNA pseudouridine synthase A of Orientia tsutsugamushi (strain Boryong) (Rickettsia tsutsugamushi).